Here is a 482-residue protein sequence, read N- to C-terminus: Mannose-1-phosphate guanylyltransferase 2 (482 aa).

Belongs to the mannose-6-phosphate isomerase type 2 family.

The enzyme catalyses alpha-D-mannose 1-phosphate + GTP + H(+) = GDP-alpha-D-mannose + diphosphate. It functions in the pathway nucleotide-sugar biosynthesis; GDP-alpha-D-mannose biosynthesis; GDP-alpha-D-mannose from alpha-D-mannose 1-phosphate (GTP route): step 1/1. Functionally, involved in GDP-mannose biosynthesis which serves as the activated sugar nucleotide precursor for mannose residues in cell surface polysaccharides. This enzyme participates in synthesis of the LPS O antigen. This is Mannose-1-phosphate guanylyltransferase 2 (manC2) from Escherichia coli O157:H7.